The following is a 370-amino-acid chain: Peptidoglycan glycosyltransferase MrdB (370 aa).

9 consecutive transmembrane segments (helical) span residues 20-40 (MLLI…SASG), 50-70 (IGQI…PPRV), 75-95 (APYL…FGAI), 136-156 (SLKN…LVAA), 160-180 (LGTS…SGLS), 183-203 (LIGV…FFLM), 263-283 (FIFA…LLAL), 312-332 (LILF…LPVV), and 336-356 (LPLV…FGIV).

It belongs to the SEDS family. MrdB/RodA subfamily.

It localises to the cell inner membrane. The catalysed reaction is [GlcNAc-(1-&gt;4)-Mur2Ac(oyl-L-Ala-gamma-D-Glu-L-Lys-D-Ala-D-Ala)](n)-di-trans,octa-cis-undecaprenyl diphosphate + beta-D-GlcNAc-(1-&gt;4)-Mur2Ac(oyl-L-Ala-gamma-D-Glu-L-Lys-D-Ala-D-Ala)-di-trans,octa-cis-undecaprenyl diphosphate = [GlcNAc-(1-&gt;4)-Mur2Ac(oyl-L-Ala-gamma-D-Glu-L-Lys-D-Ala-D-Ala)](n+1)-di-trans,octa-cis-undecaprenyl diphosphate + di-trans,octa-cis-undecaprenyl diphosphate + H(+). It functions in the pathway cell wall biogenesis; peptidoglycan biosynthesis. Functionally, peptidoglycan polymerase that is essential for cell wall elongation. In Escherichia coli O157:H7, this protein is Peptidoglycan glycosyltransferase MrdB.